Consider the following 336-residue polypeptide: MLQSLAGSSCVRLVERHRSARCFGFLVLGYLLYLVFGAVVFSSVELPYEDLLRQELRKLKRRFLEEHECLSEQQLEQFLGRVLEASNYGVSVLSNASGNWNWDFTSALFFASTVLSTTGYGHTVPLSDGGKAFCIIYSVIGIPFTLLFLTAVVQRITVHVTRRPVLYFHIRWGFSKQVVAIVHAVLLGFVTVSCFFFIPAAVFSVLEDDWNFLESFYFCFISLSTIGLGDYVPGEGYNQKFRELYKIGITCYLLLGLIAMLVVLETFCELHELKKFRKMFYVKKDKDEDQVHIIEHDQLSFSSITDQAAGMKEDQKQNEPFVATQSSACMDGPANH.

Over 1–20 (MLQSLAGSSCVRLVERHRSA) the chain is Cytoplasmic. A helical membrane pass occupies residues 21–41 (RCFGFLVLGYLLYLVFGAVVF). Residues 42-103 (SSVELPYEDL…SNASGNWNWD (62 aa)) lie on the Extracellular side of the membrane. An N-linked (GlcNAc...) asparagine glycan is attached at Asn-95. An intramembrane region (helical) is located at residues 104-116 (FTSALFFASTVLS). Residues 117–122 (TTGYGH) lie within the membrane without spanning it. The selectivity filter 1 stretch occupies residues 117–122 (TTGYGH). The Extracellular segment spans residues 123-132 (TVPLSDGGKA). Residues 133 to 156 (FCIIYSVIGIPFTLLFLTAVVQRI) traverse the membrane as a helical segment. The Cytoplasmic segment spans residues 157–181 (TVHVTRRPVLYFHIRWGFSKQVVAI). Residues 182-202 (VHAVLLGFVTVSCFFFIPAAV) form a helical membrane-spanning segment. The Extracellular portion of the chain corresponds to 203 to 211 (FSVLEDDWN). The helical intramembrane region spans 212–224 (FLESFYFCFISLS). The segment at 225–230 (TIGLGD) is selectivity filter 2. The stretch at 225–231 (TIGLGDY) is an intramembrane region. At 232–243 (VPGEGYNQKFRE) the chain is on the extracellular side. Residues 244 to 267 (LYKIGITCYLLLGLIAMLVVLETF) form a helical membrane-spanning segment. Topologically, residues 268 to 336 (CELHELKKFR…SACMDGPANH (69 aa)) are cytoplasmic. Lys-274 is covalently cross-linked (Glycyl lysine isopeptide (Lys-Gly) (interchain with G-Cter in SUMO)). An important for intracellular retention in recycling endosomes region spans residues 293 to 299 (IIEHDQL). A disordered region spans residues 315–336 (QKQNEPFVATQSSACMDGPANH). The residue at position 326 (Ser-326) is a Phosphoserine.

This sequence belongs to the two pore domain potassium channel (TC 1.A.1.8) family. In terms of assembly, homodimer; disulfide-linked. Heterodimer with KCNK2; disulfide-linked. In astrocytes, forms mostly heterodimeric potassium channels with KCNK2, with only a minor proportion of functional channels containing homodimeric KCNK1. Interacts with KCNK3 and KCNK9, forming functional heterodimeric channels. Interacts with GNG4. Identified in a complex with PSD and ARF6; interacts only with PSD that is bound to ARF6. Interacts with UBE2I. Sumoylation is controversial. Sumoylated by UBE2I. Not sumoylated when expressed in xenopus oocytes or mammalian cells. Sumoylation inactivates the channel, but does not interfere with expression at the cell membrane. Sumoylation of a single subunit is sufficient to silence the dimeric channel. Sumoylation of KCNK1 is sufficient to silence heterodimeric channels formed by KCNK1 and KCNK3 or KCNK9. Desumoylated by SENP1; this activates the channel. Desumoylated by SENP1; this strongly increases halothane-mediated activation of heterodimeric channels formed with KCNK9. SENP1 treatment has no effect.

The protein resides in the cell membrane. Its subcellular location is the recycling endosome. The protein localises to the synaptic cell membrane. It localises to the cytoplasmic vesicle. It is found in the perikaryon. The protein resides in the cell projection. Its subcellular location is the dendrite. The protein localises to the apical cell membrane. It carries out the reaction K(+)(in) = K(+)(out). It catalyses the reaction NH4(+)(in) = NH4(+)(out). The enzyme catalyses Na(+)(in) = Na(+)(out). The catalysed reaction is Rb(+)(in) = Rb(+)(out). It carries out the reaction Cs(+)(in) = Cs(+)(out). It catalyses the reaction Li(+)(in) = Li(+)(out). The enzyme catalyses L-glutamate(out) = L-glutamate(in). The catalysed reaction is chloride(in) = chloride(out). In terms of biological role, ion channel that contributes to passive transmembrane potassium transport and to the regulation of the resting membrane potential in brain astrocytes, but also in kidney and in other tissues. Forms dimeric channels through which potassium ions pass in accordance with their electrochemical gradient. The channel is selective for K(+) ions at physiological potassium concentrations and at neutral pH, but becomes permeable to Na(+) at subphysiological K(+) levels, and upon acidification of the extracellular medium. The homodimer has very low potassium channel activity, when expressed in heterologous systems, and can function as weakly inward rectifying potassium channel. Channel activity is modulated by activation of serotonin receptors. Heterodimeric channels containing KCNK1 and KCNK2 have much higher activity, and may represent the predominant form in astrocytes. Heterodimeric channels containing KCNK1 and KCNK3 or KCNK9 have much higher activity. Heterodimeric channels formed by KCNK1 and KCNK9 may contribute to halothane-sensitive currents. Mediates outward rectifying potassium currents in dentate gyrus granule cells and contributes to the regulation of their resting membrane potential. Contributes to the regulation of action potential firing in dentate gyrus granule cells and down-regulates their intrinsic excitability. In astrocytes, the heterodimer formed by KCNK1 and KCNK2 is required for rapid glutamate release in response to activation of G-protein coupled receptors, such as F2R and CNR1. Required for normal ion and water transport in the kidney. Contributes to the regulation of the resting membrane potential of pancreatic beta cells. The low channel activity of homodimeric KCNK1 may be due to sumoylation. The low channel activity may be due to rapid internalization from the cell membrane and retention in recycling endosomes. Permeable to monovalent cations with ion selectivity for K(+) &gt; Rb(+) &gt;&gt; NH4(+) &gt;&gt; Cs(+) = Na(+) = Li(+). The polypeptide is Potassium channel subfamily K member 1 (Pongo abelii (Sumatran orangutan)).